Reading from the N-terminus, the 85-residue chain is Putative membrane protein insertion efficiency factor (85 aa).

It belongs to the UPF0161 family.

It is found in the cell membrane. Could be involved in insertion of integral membrane proteins into the membrane. The polypeptide is Putative membrane protein insertion efficiency factor (Baumannia cicadellinicola subsp. Homalodisca coagulata).